A 122-amino-acid chain; its full sequence is Biogenesis of lysosome-related organelles complex 1 subunit BLS1 (122 aa).

At serine 33 the chain carries Phosphoserine.

It belongs to the BLOC1S1 family. Component of the biogenesis of lysosome-related organelles complex-1 (BLOC-1) composed of at least BLI1, BLS1, CNL1, KXD1, SNN1 and VAB2.

It localises to the endosome. Functionally, component of the biogenesis of lysosome-related organelles complex-1 (BLOC-1), a complex involved in endosomal cargo sorting. The protein is Biogenesis of lysosome-related organelles complex 1 subunit BLS1 (BLS1) of Saccharomyces cerevisiae (strain YJM789) (Baker's yeast).